Consider the following 174-residue polypeptide: NADH-quinone oxidoreductase subunit B (174 aa).

[4Fe-4S] cluster contacts are provided by cysteine 51, cysteine 52, cysteine 116, and cysteine 146.

This sequence belongs to the complex I 20 kDa subunit family. NDH-1 is composed of 14 different subunits. Subunits NuoB, C, D, E, F, and G constitute the peripheral sector of the complex. It depends on [4Fe-4S] cluster as a cofactor.

Its subcellular location is the cell inner membrane. It catalyses the reaction a quinone + NADH + 5 H(+)(in) = a quinol + NAD(+) + 4 H(+)(out). Its function is as follows. NDH-1 shuttles electrons from NADH, via FMN and iron-sulfur (Fe-S) centers, to quinones in the respiratory chain. The immediate electron acceptor for the enzyme in this species is believed to be ubiquinone. Couples the redox reaction to proton translocation (for every two electrons transferred, four hydrogen ions are translocated across the cytoplasmic membrane), and thus conserves the redox energy in a proton gradient. This chain is NADH-quinone oxidoreductase subunit B, found in Anaplasma phagocytophilum (strain HZ).